A 124-amino-acid polypeptide reads, in one-letter code: Probable glycine cleavage system H protein (124 aa).

The Lipoyl-binding domain maps to 25–106 (TATIGITDYA…PYGSWLVKMA (82 aa)). At Lys-66 the chain carries N6-lipoyllysine.

It belongs to the GcvH family. The glycine cleavage system is composed of four proteins: P, T, L and H. Requires (R)-lipoate as cofactor.

Its function is as follows. The glycine cleavage system catalyzes the degradation of glycine. The H protein shuttles the methylamine group of glycine from the P protein to the T protein. The polypeptide is Probable glycine cleavage system H protein (Thermoplasma acidophilum (strain ATCC 25905 / DSM 1728 / JCM 9062 / NBRC 15155 / AMRC-C165)).